The sequence spans 456 residues: TGACG-sequence-specific DNA-binding protein TGA-2.1 (456 aa).

Disordered regions lie at residues Met-1–Arg-41 and Ser-115–Leu-170. Composition is skewed to polar residues over residues Gly-9–Arg-41 and Gly-125–Asp-141. The span at Asp-158–Thr-169 shows a compositional bias: basic and acidic residues. Residues Asp-166–Gly-229 enclose the bZIP domain. Positions Gln-167 to Asn-220 form a coiled coil. The segment at Lys-168–Lys-188 is basic motif. The segment at Leu-194–Leu-208 is leucine-zipper. Residues Pro-233–Arg-450 form the DOG1 domain.

Belongs to the bZIP family. As to quaternary structure, can form heterodimer with TGA2.2.

It is found in the nucleus. Functionally, transcriptional activator that binds specifically to the DNA sequence 5'-TGACG-3'. Recognizes ocs elements like the as-1 motif of the cauliflower mosaic virus 35S promoter. Binding to the as-1-like cis elements mediate auxin- and salicylic acid-inducible transcription. The chain is TGACG-sequence-specific DNA-binding protein TGA-2.1 (TGA21) from Nicotiana tabacum (Common tobacco).